A 544-amino-acid chain; its full sequence is Probable protein kinase UbiB (544 aa).

A Protein kinase domain is found at 123 to 505 (EFDEQALASA…GRQKSHNVRS (383 aa)). ATP-binding positions include 129–137 (LASASIAQV) and Lys-156. Asp-291 (proton acceptor) is an active-site residue. The chain crosses the membrane as a helical span at residues 522-540 (LPLWLSCGTLVTVLLVLLL).

The protein belongs to the ABC1 family. UbiB subfamily.

The protein localises to the cell inner membrane. Its pathway is cofactor biosynthesis; ubiquinone biosynthesis [regulation]. Is probably a protein kinase regulator of UbiI activity which is involved in aerobic coenzyme Q (ubiquinone) biosynthesis. The sequence is that of Probable protein kinase UbiB from Actinobacillus pleuropneumoniae serotype 7 (strain AP76).